Reading from the N-terminus, the 123-residue chain is UPF0426 protein At1g28150, chloroplastic (123 aa).

Residues 1-26 (MGFVLICTCPPSSGVVVSQLHHHQFS) constitute a chloroplast transit peptide. The interval 97–123 (SGITEEEVDADGVVSNDEDSPQQIEIE) is disordered. A compositionally biased stretch (acidic residues) spans 100 to 123 (TEEEVDADGVVSNDEDSPQQIEIE).

The protein belongs to the UPF0426 family.

It is found in the plastid. Its subcellular location is the chloroplast. The protein resides in the plastoglobule. The sequence is that of UPF0426 protein At1g28150, chloroplastic from Arabidopsis thaliana (Mouse-ear cress).